A 355-amino-acid polypeptide reads, in one-letter code: tRNA-specific 2-thiouridylase MnmA (355 aa).

Residues 6 to 13 (LLSGGVDS) and L33 contribute to the ATP site. C100 (nucleophile) is an active-site residue. A disulfide bridge links C100 with C195. Residue G123 coordinates ATP. The interaction with tRNA stretch occupies residues 145–147 (KDQ). C195 serves as the catalytic Cysteine persulfide intermediate.

It belongs to the MnmA/TRMU family.

It localises to the cytoplasm. It carries out the reaction S-sulfanyl-L-cysteinyl-[protein] + uridine(34) in tRNA + AH2 + ATP = 2-thiouridine(34) in tRNA + L-cysteinyl-[protein] + A + AMP + diphosphate + H(+). Catalyzes the 2-thiolation of uridine at the wobble position (U34) of tRNA, leading to the formation of s(2)U34. This chain is tRNA-specific 2-thiouridylase MnmA, found in Borrelia garinii subsp. bavariensis (strain ATCC BAA-2496 / DSM 23469 / PBi) (Borreliella bavariensis).